Reading from the N-terminus, the 298-residue chain is Phosphatidylserine decarboxylase proenzyme (298 aa).

Active-site charge relay system; for autoendoproteolytic cleavage activity residues include aspartate 113, histidine 169, and serine 256. The active-site Schiff-base intermediate with substrate; via pyruvic acid; for decarboxylase activity is serine 256. Serine 256 is subject to Pyruvic acid (Ser); by autocatalysis.

It belongs to the phosphatidylserine decarboxylase family. PSD-B subfamily. Prokaryotic type II sub-subfamily. In terms of assembly, heterodimer of a large membrane-associated beta subunit and a small pyruvoyl-containing alpha subunit. Pyruvate is required as a cofactor. Post-translationally, is synthesized initially as an inactive proenzyme. Formation of the active enzyme involves a self-maturation process in which the active site pyruvoyl group is generated from an internal serine residue via an autocatalytic post-translational modification. Two non-identical subunits are generated from the proenzyme in this reaction, and the pyruvate is formed at the N-terminus of the alpha chain, which is derived from the carboxyl end of the proenzyme. The autoendoproteolytic cleavage occurs by a canonical serine protease mechanism, in which the side chain hydroxyl group of the serine supplies its oxygen atom to form the C-terminus of the beta chain, while the remainder of the serine residue undergoes an oxidative deamination to produce ammonia and the pyruvoyl prosthetic group on the alpha chain. During this reaction, the Ser that is part of the protease active site of the proenzyme becomes the pyruvoyl prosthetic group, which constitutes an essential element of the active site of the mature decarboxylase.

The protein resides in the cell membrane. The catalysed reaction is a 1,2-diacyl-sn-glycero-3-phospho-L-serine + H(+) = a 1,2-diacyl-sn-glycero-3-phosphoethanolamine + CO2. It participates in phospholipid metabolism; phosphatidylethanolamine biosynthesis; phosphatidylethanolamine from CDP-diacylglycerol: step 2/2. Functionally, catalyzes the formation of phosphatidylethanolamine (PtdEtn) from phosphatidylserine (PtdSer). This is Phosphatidylserine decarboxylase proenzyme from Desulfitobacterium hafniense (strain Y51).